Consider the following 192-residue polypeptide: Transcription termination/antitermination protein NusG (192 aa).

This sequence belongs to the NusG family.

Its function is as follows. Participates in transcription elongation, termination and antitermination. This is Transcription termination/antitermination protein NusG from Rickettsia prowazekii (strain Madrid E).